Consider the following 230-residue polypeptide: GDT1-like protein 4 (230 aa).

A run of 6 helical transmembrane segments spans residues 12–32 (LAMT…AILA), 39–59 (LVLA…ATLG), 71–91 (THHI…WDGF), 135–155 (AFLT…NFFG), 175–195 (FGVV…AVIG), and 207–227 (IVAL…YLTS).

This sequence belongs to the GDT1 family.

The protein resides in the membrane. This Arabidopsis thaliana (Mouse-ear cress) protein is GDT1-like protein 4.